We begin with the raw amino-acid sequence, 296 residues long: 4-hydroxybenzoate octaprenyltransferase (296 aa).

8 helical membrane-spanning segments follow: residues 28–48 (PIGI…AGNG), 52–72 (LANV…GCCI), 102–122 (ALTL…CTNS), 145–167 (TYYP…FTAA), 174–196 (GAWL…YAMV), 219–239 (SIIL…GSRF), 241–261 (LGGW…WEYW), and 275–295 (FLHN…DYAL).

This sequence belongs to the UbiA prenyltransferase family. The cofactor is Mg(2+).

Its subcellular location is the cell inner membrane. It catalyses the reaction all-trans-octaprenyl diphosphate + 4-hydroxybenzoate = 4-hydroxy-3-(all-trans-octaprenyl)benzoate + diphosphate. Its pathway is cofactor biosynthesis; ubiquinone biosynthesis. In terms of biological role, catalyzes the prenylation of para-hydroxybenzoate (PHB) with an all-trans polyprenyl group. Mediates the second step in the final reaction sequence of ubiquinone-8 (UQ-8) biosynthesis, which is the condensation of the polyisoprenoid side chain with PHB, generating the first membrane-bound Q intermediate 3-octaprenyl-4-hydroxybenzoate. The polypeptide is 4-hydroxybenzoate octaprenyltransferase (Pseudomonas putida (strain ATCC 700007 / DSM 6899 / JCM 31910 / BCRC 17059 / LMG 24140 / F1)).